Here is a 790-residue protein sequence, read N- to C-terminus: Probable copper-transporting ATPase SynA (790 aa).

Residues M1–Q105 lie on the Cytoplasmic side of the membrane. The 68-residue stretch at T14–Q81 folds into the HMA domain. Cu(+)-binding residues include C25 and C28. The chain crosses the membrane as a helical span at residues L106 to H127. Over P128–W136 the chain is Extracellular. A helical transmembrane segment spans residues F137–A156. Topologically, residues G157 to C163 are cytoplasmic. A helical membrane pass occupies residues G164–L184. At V185–F198 the chain is on the extracellular side. The helical transmembrane segment at D199–R219 threads the bilayer. The Cytoplasmic segment spans residues F220 to A358. The chain crosses the membrane as a helical span at residues I359 to L381. Over G382–A420 the chain is Extracellular. The helical transmembrane segment at L421–L438 threads the bilayer. The Cytoplasmic segment spans residues A439 to I723. D476 acts as the 4-aspartylphosphate intermediate in catalysis. Residues D669 and D673 each coordinate Mg(2+). Residues R724–G743 form a helical membrane-spanning segment. Residues A744–P755 are Extracellular-facing. The helical transmembrane segment at A756–L774 threads the bilayer. The Cytoplasmic segment spans residues L775–V790.

It belongs to the cation transport ATPase (P-type) (TC 3.A.3) family. Type IB subfamily.

Its subcellular location is the cell membrane. It carries out the reaction Cu(+)(in) + ATP + H2O = Cu(+)(out) + ADP + phosphate + H(+). Involved in copper transport. The chain is Probable copper-transporting ATPase SynA (synA) from Synechococcus elongatus (strain ATCC 33912 / PCC 7942 / FACHB-805) (Anacystis nidulans R2).